The chain runs to 283 residues: Protein boule-like (283 aa).

The disordered stretch occupies residues 1-25; it reads MQTDSLSPSPNPVSPVPLNNPTSAP. The 78-residue stretch at 33 to 110 folds into the RRM domain; it reads NRIFVGGIDF…KKLNIGPAIR (78 aa). The DAZ domain maps to 160-184; that stretch reads PSRSVCSSPVMVAQPIYQQPAYHYQ.

The protein belongs to the RRM DAZ family. Interacts with DAZ1 and DAZL. In terms of tissue distribution, testis specific. Not expressed in early embryos, primordial germ cells and spermatogonial cells. First expressed in the cytoplasm of spermatocytes and then persists through meiosis.

It is found in the cytoplasm. In terms of biological role, probable RNA-binding protein, which may be required during spermatogenesis. May act by binding to the 3'-UTR of mRNAs and regulating their translation. This is Protein boule-like (BOLL) from Homo sapiens (Human).